The sequence spans 308 residues: Transaldolase (308 aa).

The Schiff-base intermediate with substrate role is filled by K125.

This sequence belongs to the transaldolase family. Type 1 subfamily. Homodimer.

The protein localises to the cytoplasm. It carries out the reaction D-sedoheptulose 7-phosphate + D-glyceraldehyde 3-phosphate = D-erythrose 4-phosphate + beta-D-fructose 6-phosphate. Its pathway is carbohydrate degradation; pentose phosphate pathway; D-glyceraldehyde 3-phosphate and beta-D-fructose 6-phosphate from D-ribose 5-phosphate and D-xylulose 5-phosphate (non-oxidative stage): step 2/3. In terms of biological role, transaldolase is important for the balance of metabolites in the pentose-phosphate pathway. The polypeptide is Transaldolase (Pseudomonas fluorescens (strain Pf0-1)).